The primary structure comprises 295 residues: Ribosomal RNA small subunit methyltransferase A (295 aa).

S-adenosyl-L-methionine-binding residues include Asn-29, Leu-31, Gly-56, Glu-77, Asp-102, and Asn-128.

It belongs to the class I-like SAM-binding methyltransferase superfamily. rRNA adenine N(6)-methyltransferase family. RsmA subfamily.

It is found in the cytoplasm. It carries out the reaction adenosine(1518)/adenosine(1519) in 16S rRNA + 4 S-adenosyl-L-methionine = N(6)-dimethyladenosine(1518)/N(6)-dimethyladenosine(1519) in 16S rRNA + 4 S-adenosyl-L-homocysteine + 4 H(+). Its function is as follows. Specifically dimethylates two adjacent adenosines (A1518 and A1519) in the loop of a conserved hairpin near the 3'-end of 16S rRNA in the 30S particle. May play a critical role in biogenesis of 30S subunits. This is Ribosomal RNA small subunit methyltransferase A from Listeria monocytogenes serotype 4a (strain HCC23).